Here is a 1401-residue protein sequence, read N- to C-terminus: DNA-directed RNA polymerase subunit beta' (1401 aa).

Positions 70, 72, 85, and 88 each coordinate Zn(2+). The Mg(2+) site is built by Asp460, Asp462, and Asp464. Residues Cys808, Cys882, Cys889, and Cys892 each coordinate Zn(2+).

The protein belongs to the RNA polymerase beta' chain family. As to quaternary structure, the RNAP catalytic core consists of 2 alpha, 1 beta, 1 beta' and 1 omega subunit. When a sigma factor is associated with the core the holoenzyme is formed, which can initiate transcription. The cofactor is Mg(2+). Requires Zn(2+) as cofactor.

The enzyme catalyses RNA(n) + a ribonucleoside 5'-triphosphate = RNA(n+1) + diphosphate. In terms of biological role, DNA-dependent RNA polymerase catalyzes the transcription of DNA into RNA using the four ribonucleoside triphosphates as substrates. The protein is DNA-directed RNA polymerase subunit beta' of Legionella pneumophila subsp. pneumophila (strain Philadelphia 1 / ATCC 33152 / DSM 7513).